Reading from the N-terminus, the 72-residue chain is Cell division protein ZapB (72 aa).

Residues 1–72 (MSLEILDQLE…RSLLGKIDNV (72 aa)) adopt a coiled-coil conformation. A disordered region spans residues 33–57 (KNNQSQQANDALRSENEQLKSEHQN). Residues 44 to 57 (LRSENEQLKSEHQN) show a composition bias toward basic and acidic residues.

The protein belongs to the ZapB family. Homodimer. The ends of the coiled-coil dimer bind to each other, forming polymers. Interacts with FtsZ.

The protein localises to the cytoplasm. Functionally, non-essential, abundant cell division factor that is required for proper Z-ring formation. It is recruited early to the divisome by direct interaction with FtsZ, stimulating Z-ring assembly and thereby promoting cell division earlier in the cell cycle. Its recruitment to the Z-ring requires functional FtsA or ZipA. The polypeptide is Cell division protein ZapB (Pasteurella multocida (strain Pm70)).